Here is a 397-residue protein sequence, read N- to C-terminus: MNENIAEKFRADGVARPNWSAVFAVAFCVACLITVEFLPVSLLTPMAQDLGISEGVAGQSVTVTAFVAMFSSLFITQIIQATDRRYIVILFAVLLTASCLMVSFANSFTLLLLGRACLGLALGGFWAMSASLTMRLVPARTVPKALSVIFGAVSIALVIAAPLGSFLGGIIGWRNVFNAAAVMGVLCVIWVVKSLPSLPGEPSHQKQNMFSLLQRPGVMAGMIAIFMSFAGQFAFFTYIRPVYMNLAGFDVDGLTLVLLSFGIASFVGTSFSSYVLKRSVKLALAGAPLLLALSALTLIVWGSDKTVAAAIAIIWGLAFALVPVGWSTWITRSLADQAEKAGSIQVAVIQLANTCGAAVGGYALDNFGLLSPLALSGGLMLLTALVVAAKVRITPMS.

At 1-21 the chain is on the cytoplasmic side; that stretch reads MNENIAEKFRADGVARPNWSA. A helical membrane pass occupies residues 22–42; it reads VFAVAFCVACLITVEFLPVSL. Over 43-54 the chain is Periplasmic; the sequence is LTPMAQDLGISE. A helical transmembrane segment spans residues 55–75; that stretch reads GVAGQSVTVTAFVAMFSSLFI. Residues 76–85 lie on the Cytoplasmic side of the membrane; the sequence is TQIIQATDRR. Residues 86 to 106 traverse the membrane as a helical segment; it reads YIVILFAVLLTASCLMVSFAN. Position 107 (S107) is a topological domain, periplasmic. The chain crosses the membrane as a helical span at residues 108–128; that stretch reads FTLLLLGRACLGLALGGFWAM. At 129 to 147 the chain is on the cytoplasmic side; it reads SASLTMRLVPARTVPKALS. The helical transmembrane segment at 148–168 threads the bilayer; that stretch reads VIFGAVSIALVIAAPLGSFLG. At 169–175 the chain is on the periplasmic side; it reads GIIGWRN. Residues 176–196 traverse the membrane as a helical segment; that stretch reads VFNAAAVMGVLCVIWVVKSLP. The Cytoplasmic portion of the chain corresponds to 197–215; the sequence is SLPGEPSHQKQNMFSLLQR. The chain crosses the membrane as a helical span at residues 216–236; that stretch reads PGVMAGMIAIFMSFAGQFAFF. Topologically, residues 237–255 are periplasmic; that stretch reads TYIRPVYMNLAGFDVDGLT. Residues 256–276 traverse the membrane as a helical segment; sequence LVLLSFGIASFVGTSFSSYVL. At 277–281 the chain is on the cytoplasmic side; that stretch reads KRSVK. Residues 282–302 traverse the membrane as a helical segment; sequence LALAGAPLLLALSALTLIVWG. Topologically, residues 303–305 are periplasmic; that stretch reads SDK. A helical membrane pass occupies residues 306 to 326; the sequence is TVAAAIAIIWGLAFALVPVGW. The Cytoplasmic portion of the chain corresponds to 327-343; that stretch reads STWITRSLADQAEKAGS. A helical membrane pass occupies residues 344–364; the sequence is IQVAVIQLANTCGAAVGGYAL. Over 365-366 the chain is Periplasmic; sequence DN. A helical transmembrane segment spans residues 367 to 387; the sequence is FGLLSPLALSGGLMLLTALVV. Residues 388-397 lie on the Cytoplasmic side of the membrane; that stretch reads AAKVRITPMS.

This sequence belongs to the major facilitator superfamily. DHA1 family. NepI (TC 2.A.1.2.26) subfamily.

The protein localises to the cell inner membrane. The catalysed reaction is inosine(in) + H(+)(out) = inosine(out) + H(+)(in). The enzyme catalyses guanosine(in) + H(+)(out) = guanosine(out) + H(+)(in). Involved in the efflux of purine ribonucleosides, such as inosine and guanosine. This chain is Purine ribonucleoside efflux pump NepI, found in Salmonella choleraesuis (strain SC-B67).